The sequence spans 133 residues: Helix-loop-helix protein 1 (133 aa).

The segment at 1–78 (MMLNSDTMEL…RRRATAKYRT (78 aa)) is disordered. The segment covering 25–39 (DCGGGPGPDGAGSGD) has biased composition (gly residues). Residues 52-65 (ESGRKDLQHLSREE) show a composition bias toward basic and acidic residues. Residues 66–78 (RRRRRRATAKYRT) show a composition bias toward basic residues. The bHLH domain maps to 75-127 (KYRTAHATRERIRVEAFNLAFAELRKLLPTLPPDKKLSKIEILRLAICYISYL).

As to quaternary structure, efficient DNA binding requires dimerization with another bHLH protein.

The protein resides in the nucleus. In terms of biological role, may serve as DNA-binding protein and may be involved in the control of cell-type determination, possibly within the developing nervous system. The chain is Helix-loop-helix protein 1 (Nhlh1) from Mus musculus (Mouse).